The sequence spans 281 residues: Glutamate racemase (281 aa).

Substrate contacts are provided by residues aspartate 10–serine 11 and tyrosine 42–glycine 43. Cysteine 74 functions as the Proton donor/acceptor in the catalytic mechanism. Asparagine 75 to threonine 76 lines the substrate pocket. The active-site Proton donor/acceptor is cysteine 190. Threonine 191–histidine 192 lines the substrate pocket.

The protein belongs to the aspartate/glutamate racemases family.

The catalysed reaction is L-glutamate = D-glutamate. It participates in cell wall biogenesis; peptidoglycan biosynthesis. Its function is as follows. Provides the (R)-glutamate required for cell wall biosynthesis. The chain is Glutamate racemase from Oenococcus oeni (strain ATCC BAA-331 / PSU-1).